Consider the following 103-residue polypeptide: uncharacterized protein (103 aa).

The signal sequence occupies residues 1–22; that stretch reads MFRPFLNSLMLGSLFFPFIAIA.

It to the N-terminal of the FimA/PapA family of fimbria proteins.

This is an uncharacterized protein from Escherichia coli (strain K12).